The chain runs to 155 residues: 3-hydroxyacyl-[acyl-carrier-protein] dehydratase FabZ (155 aa).

Residue histidine 58 is part of the active site.

The protein belongs to the thioester dehydratase family. FabZ subfamily.

Its subcellular location is the cytoplasm. It catalyses the reaction a (3R)-hydroxyacyl-[ACP] = a (2E)-enoyl-[ACP] + H2O. Functionally, involved in unsaturated fatty acids biosynthesis. Catalyzes the dehydration of short chain beta-hydroxyacyl-ACPs and long chain saturated and unsaturated beta-hydroxyacyl-ACPs. The chain is 3-hydroxyacyl-[acyl-carrier-protein] dehydratase FabZ from Alkalilimnicola ehrlichii (strain ATCC BAA-1101 / DSM 17681 / MLHE-1).